The sequence spans 499 residues: Thioredoxin reductase 1, cytoplasmic (499 aa).

Residues 22 to 23, 42 to 43, 58 to 59, and 63 to 67 each bind FAD; these read SG, DF, TC, and GCIPK. Cys59 and Cys64 are disulfide-bonded. Lys68 is modified (N6-succinyllysine). Tyr131 carries the phosphotyrosine modification. FAD is bound by residues 131–132 and Thr161; that span reads YG. Residues Arg166, 198–204, 221–222, Arg226, 226–228, 292–293, and Lys315 each bind NADP(+); these read ASYVALE, RS, RGF, and GR. Tyr200 is a binding site for FAD. FAD-binding positions include Asp334, 341–343, and His472; that span reads ELT. Glu341 contacts NADP(+). Residue His472 is the Proton acceptor of the active site. The cysteinyl-selenocysteine (Cys-Sec) cross-link spans 497-498; sequence CU. A non-standard amino acid (selenocysteine) is located at residue Sec498.

This sequence belongs to the class-I pyridine nucleotide-disulfide oxidoreductase family. As to quaternary structure, homodimer. Requires FAD as cofactor. ISGylated.

It is found in the cytoplasm. The enzyme catalyses [thioredoxin]-dithiol + NADP(+) = [thioredoxin]-disulfide + NADPH + H(+). It carries out the reaction H2O2 + NADPH + H(+) = NADP(+) + 2 H2O. Its function is as follows. Reduces disulfideprotein thioredoxin (Trx) to its dithiol-containing form. Homodimeric flavoprotein involved in the regulation of cellular redox reactions, growth and differentiation. Contains a selenocysteine residue at the C-terminal active site that is essential for catalysis. Also has reductase activity on hydrogen peroxide (H2O2). The chain is Thioredoxin reductase 1, cytoplasmic (TXNRD1) from Bos taurus (Bovine).